Here is a 204-residue protein sequence, read N- to C-terminus: Lymphotoxin-alpha (204 aa).

The N-terminal stretch at 1–33 (MTPPGRLYLLRVRSAPVLLLLGLLLGLPPGAQG) is a signal peptide. Residues 62-204 (PAAHLIGDPS…SSVFFGAFAL (143 aa)) enclose the THD domain. N95 carries N-linked (GlcNAc...) asparagine glycosylation. A disulfide bond links C119 and C155.

This sequence belongs to the tumor necrosis factor family. In terms of assembly, homotrimer, and heterotrimer of either two LTB and one LTA subunits or (less prevalent) two LTA and one LTB subunits. Interacts with TNFRSF14.

It is found in the secreted. The protein resides in the membrane. Cytokine that in its homotrimeric form binds to TNFRSF1A/TNFR1, TNFRSF1B/TNFBR and TNFRSF14/HVEM. In its heterotrimeric form with LTB binds to TNFRSF3/LTBR. Lymphotoxin is produced by lymphocytes and is cytotoxic for a wide range of tumor cells in vitro and in vivo. This Canis lupus familiaris (Dog) protein is Lymphotoxin-alpha (LTA).